The sequence spans 357 residues: 3-isopropylmalate dehydrogenase (357 aa).

Position 76–89 (76–89 (GPKWDNEPSHNRPE)) interacts with NAD(+). Substrate contacts are provided by R96, R106, R135, and D223. D223, D247, and D251 together coordinate Mg(2+). 281–293 (GSAPDIAGQDKAN) contacts NAD(+).

The protein belongs to the isocitrate and isopropylmalate dehydrogenases family. LeuB type 1 subfamily. In terms of assembly, homodimer. Requires Mg(2+) as cofactor. It depends on Mn(2+) as a cofactor.

The protein resides in the cytoplasm. It catalyses the reaction (2R,3S)-3-isopropylmalate + NAD(+) = 4-methyl-2-oxopentanoate + CO2 + NADH. Its pathway is amino-acid biosynthesis; L-leucine biosynthesis; L-leucine from 3-methyl-2-oxobutanoate: step 3/4. Its function is as follows. Catalyzes the oxidation of 3-carboxy-2-hydroxy-4-methylpentanoate (3-isopropylmalate) to 3-carboxy-4-methyl-2-oxopentanoate. The product decarboxylates to 4-methyl-2 oxopentanoate. This is 3-isopropylmalate dehydrogenase from Helicobacter hepaticus (strain ATCC 51449 / 3B1).